The following is a 428-amino-acid chain: Glutamate-1-semialdehyde 2,1-aminomutase 1 (428 aa).

Lys267 carries the post-translational modification N6-(pyridoxal phosphate)lysine.

This sequence belongs to the class-III pyridoxal-phosphate-dependent aminotransferase family. HemL subfamily. As to quaternary structure, homodimer. Requires pyridoxal 5'-phosphate as cofactor.

It is found in the cytoplasm. The catalysed reaction is (S)-4-amino-5-oxopentanoate = 5-aminolevulinate. The protein operates within porphyrin-containing compound metabolism; protoporphyrin-IX biosynthesis; 5-aminolevulinate from L-glutamyl-tRNA(Glu): step 2/2. This Staphylococcus aureus (strain MW2) protein is Glutamate-1-semialdehyde 2,1-aminomutase 1.